The chain runs to 566 residues: Urease subunit beta (566 aa).

Residues 129–566 (GGIDTHIHFI…VPMARRYFMF (438 aa)) form the Urease domain. 3 residues coordinate Ni(2+): His134, His136, and Lys217. Lys217 bears the N6-carboxylysine mark. A substrate-binding site is contributed by His219. Residues His246 and His272 each coordinate Ni(2+). His320 serves as the catalytic Proton donor. Position 360 (Asp360) interacts with Ni(2+).

It belongs to the metallo-dependent hydrolases superfamily. Urease alpha subunit family. Heterohexamer of 3 UreA (alpha) and 3 UreB (beta) subunits. Ni cation is required as a cofactor. In terms of processing, carboxylation allows a single lysine to coordinate two nickel ions.

It is found in the cytoplasm. The catalysed reaction is urea + 2 H2O + H(+) = hydrogencarbonate + 2 NH4(+). Its pathway is nitrogen metabolism; urea degradation; CO(2) and NH(3) from urea (urease route): step 1/1. In Aliarcobacter butzleri (strain RM4018) (Arcobacter butzleri), this protein is Urease subunit beta.